We begin with the raw amino-acid sequence, 77 residues long: Dermatoxin-A1 (77 aa).

The N-terminal stretch at 1–22 (MAFLKKSLFLVLFLGLVPLFLC) is a signal peptide. Residues 23–42 (ENEKREGENEKEENDDQSEE) constitute a propeptide that is removed on maturation. Position 76 is a glutamine amide (glutamine 76).

The protein belongs to the frog skin active peptide (FSAP) family. Dermatoxin subfamily. Expressed by the skin glands.

Its subcellular location is the secreted. In terms of biological role, possesses a potent antimicrobial activity against Gram-positive and Gram-negative bacteria. Probably acts by disturbing membrane functions with its amphipathic structure. The sequence is that of Dermatoxin-A1 from Agalychnis annae (Blue-sided leaf frog).